A 533-amino-acid chain; its full sequence is E3 ubiquitin-protein ligase arih1l (533 aa).

2 disordered regions span residues 1-35 and 48-73; these read MDSD…EAVD and PAVA…QEDE. Residues 158–369 are TRIAD supradomain; sequence QDLPCQICYL…SAWYNCNRYN (212 aa). Positions 162, 165, 179, 181, 184, 187, 207, 212, 252, 257, 273, 275, 280, 283, 288, 293, 320, and 323 each coordinate Zn(2+). The RING-type 1 zinc finger occupies 162 to 212; it reads CQICYLNYPNSYFTGLECGHKFCMQCWGDYLTTKIIEEGMGQTISCPAHNC. The IBR-type zinc finger occupies 232–293; that stretch reads LKYQHLITNS…GENWHDPVKC (62 aa). Residues 320–351 form an RING-type 2; atypical zinc finger; the sequence is CPKCHVTIEKDGGCNHMVCRNQNCKAEFCWVC. Cys-333 is an active-site residue. Zn(2+) contacts are provided by Cys-338, Cys-343, Cys-348, Cys-351, His-358, and Cys-365. Residues 409-425 are a coiled coil; it reads KLYAQVKQKMEEMQQHN.

Belongs to the RBR family. Ariadne subfamily.

Its subcellular location is the cytoplasm. It catalyses the reaction [E2 ubiquitin-conjugating enzyme]-S-ubiquitinyl-L-cysteine + [acceptor protein]-L-lysine = [E2 ubiquitin-conjugating enzyme]-L-cysteine + [acceptor protein]-N(6)-ubiquitinyl-L-lysine.. It participates in protein modification; protein ubiquitination. In terms of biological role, E3 ubiquitin-protein ligase, which catalyzes polyubiquitination of target proteins together with ubiquitin-conjugating enzyme E2 ube2l3. This Danio rerio (Zebrafish) protein is E3 ubiquitin-protein ligase arih1l (arih1l).